The following is a 302-amino-acid chain: Endochitinase 2 (302 aa).

The Chitin-binding type-1 domain maps to Glu1 to Gly42. 7 disulfides stabilise this stretch: Cys3/Cys18, Cys12/Cys24, Cys17/Cys31, Cys36/Cys40, Cys73/Cys136, Cys148/Cys156, and Cys255/Cys287. Catalysis depends on Glu117, which acts as the Proton donor. Residues Gly296–Met302 constitute a propeptide, removed in mature form.

This sequence belongs to the glycosyl hydrolase 19 family. Chitinase class I subfamily.

It carries out the reaction Random endo-hydrolysis of N-acetyl-beta-D-glucosaminide (1-&gt;4)-beta-linkages in chitin and chitodextrins.. Defense against chitin-containing fungal pathogens. This Gossypium hirsutum (Upland cotton) protein is Endochitinase 2.